A 509-amino-acid polypeptide reads, in one-letter code: DNA nucleotidylexotransferase (509 aa).

A disordered region spans residues 1-25; sequence MDPLCTASSGPRKKRPRQVGASMAS. The Nuclear localization signal signature appears at 11 to 17; it reads PRKKRPR. In terms of domain architecture, BRCT spans 27-124; sequence PHDIKFQNLV…KPVEITGKHQ (98 aa). The interval 151–509 is mediates interaction with DNTTIP2; sequence SQYACQRKTT…DYIEPWERNA (359 aa). The involved in DNA binding stretch occupies residues 258-262; that stretch reads VGLKT. A 2'-deoxyribonucleoside 5'-triphosphate-binding positions include 333-338 and 342-345; these read GFRRGK and HDVD. Mg(2+)-binding residues include Asp343, Asp345, and Asp433. A 2'-deoxyribonucleoside 5'-triphosphate is bound at residue 448–449; the sequence is GW.

Belongs to the DNA polymerase type-X family. In terms of assembly, interacts with PRP19 and DNTTIP1. Forms a ternary complex with DNTTIP2 and core histone. Released from this complex by PCNA. Interacts with TRERF1. Requires Mg(2+) as cofactor.

The protein resides in the nucleus. It carries out the reaction DNA(n) + a 2'-deoxyribonucleoside 5'-triphosphate = DNA(n+1) + diphosphate. Functionally, template-independent DNA polymerase which catalyzes the random addition of deoxynucleoside 5'-triphosphate to the 3'-end of a DNA initiator. One of the in vivo functions of this enzyme is the addition of nucleotides at the junction (N region) of rearranged Ig heavy chain and T-cell receptor gene segments during the maturation of B- and T-cells. The sequence is that of DNA nucleotidylexotransferase (DNTT) from Bos taurus (Bovine).